Reading from the N-terminus, the 139-residue chain is MPPMKAVLQLSIHEERIRKKAFVTVSRCPGVTSITMDDKTGKMTVVGEVDVPVIVMKLRKLCNTELVSVEVVKPPEKKPEPEKPAPPKPAPAPAKPAEIVAWPVQMNNPYQYNPAYANSYYQPYGNSRFVTDESNCVIM.

The HMA domain occupies 3 to 70; sequence PMKAVLQLSI…LCNTELVSVE (68 aa). Positions 70–94 are disordered; that stretch reads EVVKPPEKKPEPEKPAPPKPAPAPA. Residues 73-85 show a composition bias toward basic and acidic residues; that stretch reads KPPEKKPEPEKPA. A Cysteine methyl ester modification is found at Cys136. Residue Cys136 is the site of S-farnesyl cysteine attachment. Positions 137-139 are cleaved as a propeptide — removed in mature form; the sequence is VIM.

It belongs to the HIPP family.

Its function is as follows. Probable heavy-metal-binding protein. This chain is Heavy metal-associated isoprenylated plant protein 13, found in Arabidopsis thaliana (Mouse-ear cress).